Consider the following 969-residue polypeptide: Leucine--tRNA ligase (969 aa).

Residues 46 to 56 (PYLNGVLHAGH) carry the 'HIGH' region motif. A 'KMSKS' region motif is present at residues 658-662 (KLSKS). Lys661 contributes to the ATP binding site.

It belongs to the class-I aminoacyl-tRNA synthetase family.

The protein localises to the cytoplasm. It carries out the reaction tRNA(Leu) + L-leucine + ATP = L-leucyl-tRNA(Leu) + AMP + diphosphate. The sequence is that of Leucine--tRNA ligase from Methanococcus aeolicus (strain ATCC BAA-1280 / DSM 17508 / OCM 812 / Nankai-3).